A 621-amino-acid polypeptide reads, in one-letter code: Glucose 1,6-bisphosphate synthase (621 aa).

Residues Arg-73 and Ser-175 each contribute to the alpha-D-glucose 1,6-bisphosphate site. The active-site Phosphoserine intermediate is Ser-175. Mg(2+)-binding residues include Ser-175, Asp-332, Asp-334, and Asp-336. Ser-175 bears the Phosphoserine mark. Positions 336, 337, 433, 435, and 447 each coordinate alpha-D-glucose 1,6-bisphosphate.

It belongs to the phosphohexose mutase family. In terms of tissue distribution, expressed at highest levels in the brain and testis, at intermediate levels in thymus, spleen, lung and skeletal muscle, and at lowest levels in kidney, liver and heart.

Its subcellular location is the cytoplasm. The protein localises to the cytosol. It catalyses the reaction (2R)-3-phospho-glyceroyl phosphate + alpha-D-glucose 1-phosphate = alpha-D-glucose 1,6-bisphosphate + (2R)-3-phosphoglycerate + H(+). The catalysed reaction is alpha-D-glucose 6-phosphate + (2R)-3-phospho-glyceroyl phosphate = alpha-D-glucose 1,6-bisphosphate + (2R)-3-phosphoglycerate + H(+). The enzyme catalyses (2R)-3-phospho-glyceroyl phosphate + alpha-D-ribose 1-phosphate = alpha-D-ribose 1,5-bisphosphate + (2R)-3-phosphoglycerate + H(+). It carries out the reaction 2-deoxy-alpha-D-ribose 1-phosphate + (2R)-3-phospho-glyceroyl phosphate = 2-deoxy-alpha-D-ribose 1,5-bisphosphate + (2R)-3-phosphoglycerate + H(+). It catalyses the reaction (2R)-3-phospho-glyceroyl phosphate + alpha-D-mannose 1-phosphate = alpha-D-mannose 1,6-bisphosphate + (2R)-3-phosphoglycerate + H(+). In terms of biological role, glucose 1,6-bisphosphate synthase using 1,3-bisphosphoglycerate as a phosphate donor and a series of 1-phosphate sugars, including glucose 1-phosphate, mannose 1-phosphate, ribose 1-phosphate and deoxyribose 1-phosphate, as acceptors. In vitro, also exhibits very low phosphopentomutase and phosphoglucomutase activity which are most probably not physiologically relevant. The sequence is that of Glucose 1,6-bisphosphate synthase from Mus musculus (Mouse).